A 259-amino-acid chain; its full sequence is Gem-associated protein 2 (259 aa).

Belongs to the gemin-2 family. In terms of assembly, forms a stable heteromeric complex with survival of motor neuron protein (SMN), GEMIN3 and GEMIN4. The SMN complex is associated with the spliceosomal snRNAs U1 and U5 in the cytoplasm of oocytes.

It localises to the nucleus. The protein resides in the gem. Its subcellular location is the cytoplasm. Functionally, the SMN complex catalyzes the assembly of small nuclear ribonucleoproteins (snRNPs), the building blocks of the spliceosome, and thereby plays an important role in the splicing of cellular pre-mRNAs. Most spliceosomal snRNPs contain a common set of Sm proteins SNRPB, SNRPD1, SNRPD2, SNRPD3, SNRPE, SNRPF and SNRPG that assemble in a heptameric protein ring on the Sm site of the small nuclear RNA to form the core snRNP (Sm core). In the cytosol, the Sm proteins SNRPD1, SNRPD2, SNRPE, SNRPF and SNRPG (5Sm) are trapped in an inactive 6S pICln-Sm complex by the chaperone CLNS1A that controls the assembly of the core snRNP. To assemble core snRNPs, the SMN complex accepts the trapped 5Sm proteins from CLNS1A. Binding of snRNA inside 5Sm ultimately triggers eviction of the SMN complex, thereby allowing binding of SNRPD3 and SNRPB to complete assembly of the core snRNP. Within the SMN complex, GEMIN2 constrains the conformation of 5Sm, thereby promoting 5Sm binding to snRNA containing the snRNP code (a nonameric Sm site and a 3'-adjacent stem-loop), thus preventing progression of assembly until a cognate substrate is bound. In Xenopus laevis (African clawed frog), this protein is Gem-associated protein 2 (gemin2).